We begin with the raw amino-acid sequence, 354 residues long: Phosphoribosylformylglycinamidine cyclo-ligase (354 aa).

It belongs to the AIR synthase family.

It localises to the cytoplasm. It carries out the reaction 2-formamido-N(1)-(5-O-phospho-beta-D-ribosyl)acetamidine + ATP = 5-amino-1-(5-phospho-beta-D-ribosyl)imidazole + ADP + phosphate + H(+). The protein operates within purine metabolism; IMP biosynthesis via de novo pathway; 5-amino-1-(5-phospho-D-ribosyl)imidazole from N(2)-formyl-N(1)-(5-phospho-D-ribosyl)glycinamide: step 2/2. This Synechococcus sp. (strain JA-2-3B'a(2-13)) (Cyanobacteria bacterium Yellowstone B-Prime) protein is Phosphoribosylformylglycinamidine cyclo-ligase.